We begin with the raw amino-acid sequence, 318 residues long: L-lactate dehydrogenase (318 aa).

Residues valine 15, aspartate 36, and lysine 41 each contribute to the NAD(+) site. Arginine 89 contacts substrate. NAD(+) is bound by residues serine 102, 119–121, and threonine 144; that span reads ITN. Residue 121–124 participates in substrate binding; that stretch reads NPVD. 149–152 contacts substrate; the sequence is DSAR. Histidine 176 serves as the catalytic Proton acceptor. Threonine 231 serves as a coordination point for substrate.

This sequence belongs to the LDH/MDH superfamily. LDH family. Homotetramer.

It is found in the cytoplasm. The enzyme catalyses (S)-lactate + NAD(+) = pyruvate + NADH + H(+). It participates in fermentation; pyruvate fermentation to lactate; (S)-lactate from pyruvate: step 1/1. Functionally, catalyzes the conversion of lactate to pyruvate. The protein is L-lactate dehydrogenase of Fusobacterium nucleatum subsp. nucleatum (strain ATCC 25586 / DSM 15643 / BCRC 10681 / CIP 101130 / JCM 8532 / KCTC 2640 / LMG 13131 / VPI 4355).